A 20-amino-acid polypeptide reads, in one-letter code: Brevinin-1DYa (20 aa).

Residues Cys14 and Cys20 are joined by a disulfide bond.

In terms of tissue distribution, expressed by the skin glands.

Its subcellular location is the secreted. Antimicrobial peptide. Has low activity against the Gram-positive bacterium S.aureus and the Gram-negative bacterium E.coli (MIC&lt;15 uM). Has a strong hemolytic activity. In Rana dybowskii (Dybovsky's frog), this protein is Brevinin-1DYa.